An 83-amino-acid chain; its full sequence is U25-theraphotoxin-Cg1a (83 aa).

An N-terminal signal peptide occupies residues Met1 to Ala23. Positions Gln24–Arg48 are excised as a propeptide. Disulfide bonds link Cys50-Cys66, Cys57-Cys71, and Cys65-Cys81.

This sequence belongs to the neurotoxin 07 (Beta/delta-agtx) family. 03 (aga-4) subfamily. JZTX sub-subfamily. As to expression, expressed by the venom gland.

It localises to the secreted. In terms of biological role, inhibits TTX-sensitive sodium currents in rat dorsal root ganglion (DRG) neurons. This Chilobrachys guangxiensis (Chinese earth tiger tarantula) protein is U25-theraphotoxin-Cg1a.